Here is a 203-residue protein sequence, read N- to C-terminus: Protein-methionine-sulfoxide reductase heme-binding subunit MsrQ (203 aa).

6 helical membrane-spanning segments follow: residues 10-30 (IFVL…MGLL), 37-57 (IMMD…LSMT), 75-95 (LGLW…VFIL), 110-130 (PYII…VTSN), 147-167 (LVYV…RSDL), and 169-189 (EWAI…PPVW).

It belongs to the MsrQ family. Heterodimer of a catalytic subunit (MsrP) and a heme-binding subunit (MsrQ). Requires FMN as cofactor. Heme b is required as a cofactor.

The protein localises to the cell inner membrane. Its function is as follows. Part of the MsrPQ system that repairs oxidized periplasmic proteins containing methionine sulfoxide residues (Met-O), using respiratory chain electrons. Thus protects these proteins from oxidative-stress damage caused by reactive species of oxygen and chlorine generated by the host defense mechanisms. MsrPQ is essential for the maintenance of envelope integrity under bleach stress, rescuing a wide series of structurally unrelated periplasmic proteins from methionine oxidation. MsrQ provides electrons for reduction to the reductase catalytic subunit MsrP, using the quinone pool of the respiratory chain. This Pseudomonas entomophila (strain L48) protein is Protein-methionine-sulfoxide reductase heme-binding subunit MsrQ.